Reading from the N-terminus, the 183-residue chain is Ribosome maturation factor RimM (183 aa).

The region spanning 95-171 (DPDEFYDHEL…VVVIDPPEGL (77 aa)) is the PRC barrel domain.

Belongs to the RimM family. Binds ribosomal protein uS19.

It is found in the cytoplasm. Functionally, an accessory protein needed during the final step in the assembly of 30S ribosomal subunit, possibly for assembly of the head region. Essential for efficient processing of 16S rRNA. May be needed both before and after RbfA during the maturation of 16S rRNA. It has affinity for free ribosomal 30S subunits but not for 70S ribosomes. The protein is Ribosome maturation factor RimM of Rhodococcus opacus (strain B4).